The chain runs to 111 residues: Nucleoid-associated protein lhv_0401 (111 aa).

Belongs to the YbaB/EbfC family. As to quaternary structure, homodimer.

The protein resides in the cytoplasm. Its subcellular location is the nucleoid. Functionally, binds to DNA and alters its conformation. May be involved in regulation of gene expression, nucleoid organization and DNA protection. The protein is Nucleoid-associated protein lhv_0401 of Lactobacillus helveticus (strain DPC 4571).